We begin with the raw amino-acid sequence, 513 residues long: 2,3-bisphosphoglycerate-independent phosphoglycerate mutase (513 aa).

Mn(2+)-binding residues include aspartate 12 and serine 62. Serine 62 acts as the Phosphoserine intermediate in catalysis. Substrate is bound by residues histidine 123, 153–154, arginine 185, arginine 191, 260–263, and lysine 333; these read RD and RPDR. Mn(2+)-binding residues include aspartate 400, histidine 404, aspartate 441, histidine 442, and histidine 460.

This sequence belongs to the BPG-independent phosphoglycerate mutase family. As to quaternary structure, monomer. Mn(2+) is required as a cofactor.

It catalyses the reaction (2R)-2-phosphoglycerate = (2R)-3-phosphoglycerate. It functions in the pathway carbohydrate degradation; glycolysis; pyruvate from D-glyceraldehyde 3-phosphate: step 3/5. Its function is as follows. Catalyzes the interconversion of 2-phosphoglycerate and 3-phosphoglycerate. This is 2,3-bisphosphoglycerate-independent phosphoglycerate mutase from Clostridium tetani (strain Massachusetts / E88).